Consider the following 157-residue polypeptide: Probable succinate transporter subunit YjjB (157 aa).

A run of 4 helical transmembrane segments spans residues 2–22, 55–75, 87–107, and 129–149; these read GIISFIFALAEDMLLAAIPAV, AGFNIEWATFLAALLVGSIGI, IFTVAAVIPMFPGISAYTAMI, and FLKASSIVGALSIGLSIPGLW.

This sequence belongs to the ThrE exporter (TC 2.A.79) family. As to quaternary structure, the transporter is composed of YjjB and YjjP.

It is found in the cell inner membrane. In terms of biological role, involved in succinate export with YjjP. Both proteins are required for export. This is Probable succinate transporter subunit YjjB from Klebsiella pneumoniae subsp. pneumoniae (strain ATCC 700721 / MGH 78578).